We begin with the raw amino-acid sequence, 165 residues long: NADH-ubiquinone oxidoreductase chain 6 (165 aa).

The next 4 helical transmembrane spans lie at 1–21, 47–67, 83–103, and 130–150; these read MVVY…FYSL, SFVP…VFPY, GEVV…FDNF, and GVLV…ALII.

This sequence belongs to the complex I subunit 6 family.

The protein resides in the mitochondrion membrane. The enzyme catalyses a ubiquinone + NADH + 5 H(+)(in) = a ubiquinol + NAD(+) + 4 H(+)(out). Its function is as follows. Core subunit of the mitochondrial membrane respiratory chain NADH dehydrogenase (Complex I) that is believed to belong to the minimal assembly required for catalysis. Complex I functions in the transfer of electrons from NADH to the respiratory chain. The immediate electron acceptor for the enzyme is believed to be ubiquinone. The protein is NADH-ubiquinone oxidoreductase chain 6 (ND6) of Strongylocentrotus purpuratus (Purple sea urchin).